Reading from the N-terminus, the 188-residue chain is Calcium load-activated calcium channel (188 aa).

Residues Met-1–Met-4 lie on the Lumenal side of the membrane. Residues Phe-5–Arg-32 form a helical membrane-spanning segment. Positions Arg-32 to Lys-89 form a coiled coil. At Thr-33–Val-86 the chain is on the cytoplasmic side. Residues Arg-87 to Asn-106 traverse the membrane as a helical segment. Over Ser-107–Val-120 the chain is Lumenal. The stretch at Pro-121–His-130 is an intramembrane region. The Lumenal portion of the chain corresponds to Arg-131 to Asp-140. The chain crosses the membrane as a helical span at residues Cys-141 to Leu-162. Residues Gly-163–Ser-188 are Cytoplasmic-facing.

Belongs to the TMCO1 family. Homodimer and homotetramer. Component of the multi-pass translocon (MPT) complex.

Its subcellular location is the endoplasmic reticulum membrane. It localises to the golgi apparatus membrane. Calcium-selective channel required to prevent calcium stores from overfilling, thereby playing a key role in calcium homeostasis. In response to endoplasmic reticulum (ER) overloading, assembles into a homotetramer, forming a functional calcium-selective channel, regulating the calcium content in endoplasmic reticulum store. Component of the multi-pass translocon (MPT) complex that mediates insertion of multi-pass membrane proteins into the lipid bilayer of membranes. In Danio rerio (Zebrafish), this protein is Calcium load-activated calcium channel.